We begin with the raw amino-acid sequence, 380 residues long: Cytochrome b (380 aa).

4 consecutive transmembrane segments (helical) span residues 34-54 (FGSLLAMCLATQILTGLLLAM), 78-99 (WLIRNLHANGASFFFICIFLHI), 114-134 (WNTGVVLLLTLMATAFVGYVL), and 179-199 (FFALHFLLPFMIAGITITHLM). Heme b contacts are provided by His-84 and His-98. Heme b-binding residues include His-183 and His-197. Residue His-202 participates in a ubiquinone binding. Transmembrane regions (helical) follow at residues 227–247 (LKDILGLTLMLTPLLTLALFS), 289–309 (LGGVLALAASVLILLLIPFLH), 321–341 (LSQTLFWLLVANLLVLTWVGS), and 348–368 (FIIIGQMASFSYFTILLILFP).

Belongs to the cytochrome b family. In terms of assembly, the cytochrome bc1 complex contains 11 subunits: 3 respiratory subunits (MT-CYB, CYC1 and UQCRFS1), 2 core proteins (UQCRC1 and UQCRC2) and 6 low-molecular weight proteins (UQCRH/QCR6, UQCRB/QCR7, UQCRQ/QCR8, UQCR10/QCR9, UQCR11/QCR10 and a cleavage product of UQCRFS1). This cytochrome bc1 complex then forms a dimer. The cofactor is heme b.

The protein resides in the mitochondrion inner membrane. Its function is as follows. Component of the ubiquinol-cytochrome c reductase complex (complex III or cytochrome b-c1 complex) that is part of the mitochondrial respiratory chain. The b-c1 complex mediates electron transfer from ubiquinol to cytochrome c. Contributes to the generation of a proton gradient across the mitochondrial membrane that is then used for ATP synthesis. This chain is Cytochrome b (MT-CYB), found in Tragopan satyra (Satyr tragopan).